The sequence spans 479 residues: Proline--tRNA ligase 2 (479 aa).

This sequence belongs to the class-II aminoacyl-tRNA synthetase family. ProS type 3 subfamily. In terms of assembly, homodimer.

It localises to the cytoplasm. The enzyme catalyses tRNA(Pro) + L-proline + ATP = L-prolyl-tRNA(Pro) + AMP + diphosphate. Functionally, catalyzes the attachment of proline to tRNA(Pro) in a two-step reaction: proline is first activated by ATP to form Pro-AMP and then transferred to the acceptor end of tRNA(Pro). This chain is Proline--tRNA ligase 2, found in Rhodococcus jostii (strain RHA1).